The following is a 92-amino-acid chain: RIIa domain-containing protein 1 (92 aa).

In terms of domain architecture, RIIa spans 43–77 (KEVEWLISGFFREIFLKRPDNILEFAADYFTDPRL).

The chain is RIIa domain-containing protein 1 (RIIAD1) from Homo sapiens (Human).